The sequence spans 220 residues: uncharacterized protein (220 aa).

The helical transmembrane segment at 10 to 30 (FFIIGGVILSIGLILFFLLGF) threads the bilayer.

It localises to the membrane. This is an uncharacterized protein from Methanocaldococcus jannaschii (strain ATCC 43067 / DSM 2661 / JAL-1 / JCM 10045 / NBRC 100440) (Methanococcus jannaschii).